Consider the following 513-residue polypeptide: Probable DNA ligase (513 aa).

Glu213 serves as a coordination point for ATP. Residue Lys215 is the N6-AMP-lysine intermediate of the active site. ATP contacts are provided by Arg220, Arg235, Glu264, Phe304, Arg376, and Lys382.

This sequence belongs to the ATP-dependent DNA ligase family. Mg(2+) serves as cofactor.

It catalyses the reaction ATP + (deoxyribonucleotide)n-3'-hydroxyl + 5'-phospho-(deoxyribonucleotide)m = (deoxyribonucleotide)n+m + AMP + diphosphate.. In terms of biological role, DNA ligase that seals nicks in double-stranded DNA during DNA replication, DNA recombination and DNA repair. This chain is Probable DNA ligase, found in Anaeromyxobacter dehalogenans (strain 2CP-C).